Consider the following 138-residue polypeptide: Cellular retinoic acid-binding protein 2 (138 aa).

The Nuclear localization signal motif lies at 21–31 (KALGVNMMMRK). A Glycyl lysine isopeptide (Lys-Gly) (interchain with G-Cter in SUMO) cross-link involves residue K102. 133 to 135 (RVY) provides a ligand contact to all-trans-retinoate.

The protein belongs to the calycin superfamily. Fatty-acid binding protein (FABP) family. As to quaternary structure, interacts with importin alpha. Interacts with RXR and RARA. In terms of processing, sumoylated in response to retinoic acid binding, sumoylation is critical for dissociation from ER and subsequent nuclear translocation. As to expression, embryo and skin of adult mouse.

It is found in the cytoplasm. Its subcellular location is the endoplasmic reticulum. It localises to the nucleus. Functionally, transports retinoic acid to the nucleus. Regulates the access of retinoic acid to the nuclear retinoic acid receptors. This chain is Cellular retinoic acid-binding protein 2 (Crabp2), found in Mus musculus (Mouse).